Consider the following 345-residue polypeptide: Inositol 2-dehydrogenase (345 aa).

Belongs to the Gfo/Idh/MocA family. Homotetramer.

It carries out the reaction myo-inositol + NAD(+) = scyllo-inosose + NADH + H(+). Its function is as follows. Involved in the oxidation of myo-inositol (MI) to 2-keto-myo-inositol (2KMI or 2-inosose). The chain is Inositol 2-dehydrogenase from Mycolicibacterium smegmatis (strain ATCC 700084 / mc(2)155) (Mycobacterium smegmatis).